Consider the following 187-residue polypeptide: Elongation factor P (187 aa).

Belongs to the elongation factor P family.

Its subcellular location is the cytoplasm. Its pathway is protein biosynthesis; polypeptide chain elongation. Its function is as follows. Involved in peptide bond synthesis. Stimulates efficient translation and peptide-bond synthesis on native or reconstituted 70S ribosomes in vitro. Probably functions indirectly by altering the affinity of the ribosome for aminoacyl-tRNA, thus increasing their reactivity as acceptors for peptidyl transferase. This Ruegeria sp. (strain TM1040) (Silicibacter sp.) protein is Elongation factor P.